The following is a 1129-amino-acid chain: ISWI chromatin-remodeling complex ATPase ISW1 (1129 aa).

A disordered region spans residues 144 to 177; sequence KANGKGKGKHQDVRRRKTEHEEDAELLKEEDSDD. Over residues 147–160 the composition is skewed to basic residues; sequence GKGKGKHQDVRRRK. Acidic residues predominate over residues 164 to 177; sequence EEDAELLKEEDSDD. Positions 208–373 constitute a Helicase ATP-binding domain; it reads VSLHKNKIAG…WALLNFLLPD (166 aa). 221–228 contributes to the ATP binding site; the sequence is DEMGLGKT. The short motif at 324–327 is the DEAH box element; it reads DEAH. The region spanning 506-657 is the Helicase C-terminal domain; sequence VLDKLLKKLK…QLVIQQNRTS (152 aa). Positions 683–705 are disordered; that stretch reads FKSGTSTGSAGTPEPGSGEKGDD. Thr694 bears the Phosphothreonine mark. Ser846 carries the post-translational modification Phosphoserine. 2 consecutive SANT domains span residues 882–935 and 988–1052; these read EGFT…SNIE and NKRT…LLQC. A compositionally biased stretch (basic and acidic residues) spans 1073-1108; the sequence is KEDENGKRIREEFADQTANEKENVDGVESKKAKIED. Residues 1073–1129 form a disordered region; that stretch reads KEDENGKRIREEFADQTANEKENVDGVESKKAKIEDTSNVGTEQLVAEKIPENETTH.

The protein belongs to the SNF2/RAD54 helicase family. ISWI subfamily. Component of the ISW1A complex, which at least consists of ISW1 and IOC3. Component of the ISW1B complex, which at least consists of ISW1, IOC2 and IOC4.

The protein resides in the nucleus. In terms of biological role, catalytic component of ISW1-type complexes, which act by remodeling the chromatin by catalyzing an ATP-dependent alteration in the structure of nucleosomal DNA. They are involved in coordinating transcriptional repression, activation and elongation phases. The ISW1A complex represses gene expression at initiation through specific positioning of a promoter proximal dinucleosome. The ISW1B complex acts within coding regions to control the amount of RNA polymerase II released into productive elongation and to coordinate elongation with termination and pre-mRNA processing. The polypeptide is ISWI chromatin-remodeling complex ATPase ISW1 (ISW1) (Saccharomyces cerevisiae (strain ATCC 204508 / S288c) (Baker's yeast)).